Here is an 883-residue protein sequence, read N- to C-terminus: Phosphoenolpyruvate carboxylase (883 aa).

Residues His138 and Lys546 contribute to the active site.

Belongs to the PEPCase type 1 family. Requires Mg(2+) as cofactor.

It catalyses the reaction oxaloacetate + phosphate = phosphoenolpyruvate + hydrogencarbonate. Functionally, forms oxaloacetate, a four-carbon dicarboxylic acid source for the tricarboxylic acid cycle. In Salmonella arizonae (strain ATCC BAA-731 / CDC346-86 / RSK2980), this protein is Phosphoenolpyruvate carboxylase.